A 976-amino-acid chain; its full sequence is Dolichyl-phosphooligosaccharide-protein glycotransferase 1 (976 aa).

Residues 1–21 are Cytoplasmic-facing; sequence MVKSKVKKVEKGKEGEEKRST. The helical transmembrane segment at 22–42 threads the bilayer; the sequence is YVLLKKVLIPILVFGFAIYAF. Residues 43 to 112 are Extracellular-facing; the sequence is YLRHLTAGKY…KVVSLFGYNE (70 aa). Positions 55 to 57 match the DXD motif 1 motif; that stretch reads DPD. D57 contacts Mn(2+). Residues 113–133 form a helical membrane-spanning segment; it reads LQAFLLWPPFVGFLGVIAVYL. The Cytoplasmic portion of the chain corresponds to 134–135; it reads LG. Residues 136–156 form a helical membrane-spanning segment; it reads RKVLNEWTGLWGAVVLTVSTA. The Extracellular segment spans residues 157-165; sequence NFSRTFSGN. The chain crosses the membrane as a helical span at residues 166–186; the sequence is ARGDGPFMALFIFASVAMLYY. Residues R167 and D169 each coordinate Mn(2+). The DXD motif 2 signature appears at 167–169; sequence RGD. The Cytoplasmic portion of the chain corresponds to 187–193; sequence LKESNKT. Residues 194–214 traverse the membrane as a helical segment; it reads RKIIYGTLFVLLTVISLGAWN. A topological domain (extracellular) is located at residue G215. Residues 216–236 form a helical membrane-spanning segment; the sequence is SPFGLMVLLGFASLQTIILFI. At 237–247 the chain is on the cytoplasmic side; that stretch reads FGKLEELKKFV. The helical transmembrane segment at 248–268 threads the bilayer; it reads KEFYPAYLAILAFGYALTFPG. Residue I269 is a topological domain, extracellular. The chain crosses the membrane as a helical span at residues 270-290; it reads VKIGGFIRFAFEVFLGLIFLL. The Cytoplasmic segment spans residues 291 to 306; the sequence is VIMLYGGRYLNYSDKK. The helical transmembrane segment at 307 to 327 threads the bilayer; that stretch reads HRFLVVTIIVLLGFGGAYAYV. Over 328 to 360 the chain is Extracellular; it reads GPKLFRLMGGAYQSTQVYETVQELAKTTIGDVK. A TIXE motif motif is present at residues 347-350; it reads TVQE. A helical membrane pass occupies residues 361–381; it reads AYYGVESGNGLIFFLSIPGLL. The Cytoplasmic segment spans residues 382-396; the sequence is ILLTKYLYDLFKKAK. The chain crosses the membrane as a helical span at residues 397 to 417; it reads SDNETLFALVFYTMSLYLLYL. Position 418 (A418) is a topological domain, extracellular. Residues 419–439 form a helical membrane-spanning segment; sequence VRFLFLASYAVALFFGIFIGF. Position 420 (R420) interacts with a glycophospholipid. At 440–453 the chain is on the cytoplasmic side; sequence SMDVIEKMKENIGI. Residues 454–474 form a helical membrane-spanning segment; that stretch reads KAALGIVLSLMILVIPFVHAP. Over 475-976 the chain is Extracellular; sequence VLARSARALK…SASAPHHSSE (502 aa). An interacts with target acceptor peptide in protein substrate region spans residues 513–515; it reads WWD. The WWDYG motif signature appears at 513 to 517; sequence WWDYG. Residue Y518 coordinates a glycophospholipid. The DK motif signature appears at 573-580; that stretch reads DWAKFNAI.

Belongs to the STT3 family. Mn(2+) serves as cofactor. Mg(2+) is required as a cofactor.

It localises to the cell membrane. It carries out the reaction an archaeal dolichyl phosphooligosaccharide + [protein]-L-asparagine = an archaeal dolichyl phosphate + a glycoprotein with the oligosaccharide chain attached by N-beta-D-glycosyl linkage to a protein L-asparagine.. It participates in protein modification; protein glycosylation. In terms of biological role, oligosaccharyl transferase (OST) that catalyzes the initial transfer of a defined glycan (ManNAcXyl(2)GlcAMan(2)GalNAc in Pyrococcus) from the lipid carrier dolichol-monophosphate to an asparagine residue within an Asn-X-Ser/Thr consensus motif in nascent polypeptide chains, the first step in protein N-glycosylation. The protein is Dolichyl-phosphooligosaccharide-protein glycotransferase 1 (aglB1) of Pyrococcus horikoshii (strain ATCC 700860 / DSM 12428 / JCM 9974 / NBRC 100139 / OT-3).